We begin with the raw amino-acid sequence, 467 residues long: Uronate isomerase (467 aa).

The protein belongs to the metallo-dependent hydrolases superfamily. Uronate isomerase family.

It carries out the reaction D-glucuronate = D-fructuronate. It catalyses the reaction aldehydo-D-galacturonate = keto-D-tagaturonate. Its pathway is carbohydrate metabolism; pentose and glucuronate interconversion. This is Uronate isomerase from Clostridium acetobutylicum (strain ATCC 824 / DSM 792 / JCM 1419 / IAM 19013 / LMG 5710 / NBRC 13948 / NRRL B-527 / VKM B-1787 / 2291 / W).